Reading from the N-terminus, the 594-residue chain is MKLVLIFLIINFLLIINCENLIKVLDVRLAQTHIIPIEGKTWNLKNKTQHMSIIGNRRALLLASFEDLNKSYYVSIWLDNKIIGSLELKDPSQLPQTEDNGERYSTKHHSVLLPKEWIRPNMKIKFTLTESKDNSSLNIDSSNFFYPDVSQDYTLKMWTLPFYLFGANDTNTQPFSVTNGIGSEITKELMERWSCSDIIAVNHPIQRIDWPYLVMEPRNGNPAMLITNSDQKKDGYAIMNGVLNILTEIREAFGESTSSIQIYSPLLHLGANGKYTNPGGGLGGGSRGTGDHKYTFTFFHEQGHAMGLPHAGEAFAAGSYPYVNGSLLGSEWGYDANHNELLGTFIPPTSDQFKNCRRNSVFDSKGRCVKQSVMQGGAGDYSSKYRYSMFADFEMTTIQNYFKNSIYYDQTKGTYKKWNDTSKSYFEYIPSTKNNGLWGLDDGTPIERDIEVYTILFTYSTVGPKELSQIYPILKSSKGNLMKRYDPTNKNDMKLITPGSGSWYCFASGCDYTVRVTFDDDSLEHILLRQGKRKYWNPMGDFKENLYNATSSNSFILRGINVKATKSIKKVELLETLMAWKGISNATVLVSKDF.

Positions 1 to 18 are cleaved as a signal peptide; sequence MKLVLIFLIINFLLIINC. One can recognise a Peptidase M66 domain in the interval 147 to 408; sequence PDVSQDYTLK…QNYFKNSIYY (262 aa). Zn(2+) is bound at residue His300. Glu301 is a catalytic residue. His304 and His310 together coordinate Zn(2+).

It belongs to the dictomallein family. Zn(2+) is required as a cofactor.

The protein localises to the secreted. In Dictyostelium discoideum (Social amoeba), this protein is Dictomallein-4 (dtmlD).